The primary structure comprises 179 residues: Insulin-like growth factor 2 (179 aa).

An N-terminal signal peptide occupies residues M1–A24. The interval A25–F52 is b. 3 disulfides stabilise this stretch: C33–C71, C45–C84, and C70–C75. Residues S53–R64 form a c region. An a region spans residues G65–A85. The interval A86–E91 is d. The propeptide at R92–D179 is e peptide. O-linked (GalNAc...) threonine glycosylation occurs at T106. Residue S154 is glycosylated (O-linked (GalNAc...) serine). The interval A160 to D179 is disordered. T163 carries O-linked (GalNAc...) threonine glycosylation.

It belongs to the insulin family. In terms of assembly, interacts with MYORG; this interaction is required for IGF2 secretion. Interacts with integrins ITGAV:ITGB3 and ITGA6:ITGB4; integrin-binding is required for IGF2 signaling. Interacts with IGFBP2. Proteolytically processed by PCSK4, proIGF2 is cleaved at Arg-128 and Arg-92 to generate big-IGF2 and mature IGF2.

The protein resides in the secreted. The insulin-like growth factors possess growth-promoting activity. Major fetal growth hormone in mammals. Plays a key role in regulating fetoplacental development. IGF2 is influenced by placental lactogen. Also involved in tissue differentiation. In adults, involved in glucose metabolism in adipose tissue, skeletal muscle and liver. Acts as a ligand for integrin which is required for IGF2 signaling. Positively regulates myogenic transcription factor MYOD1 function by facilitating the recruitment of transcriptional coactivators, thereby controlling muscle terminal differentiation. Inhibits myoblast differentiation and modulates metabolism via increasing the mitochondrial respiration rate. In terms of biological role, preptin undergoes glucose-mediated co-secretion with insulin, and acts as a physiological amplifier of glucose-mediated insulin secretion. Exhibits osteogenic properties by increasing osteoblast mitogenic activity through phosphoactivation of MAPK1 and MAPK3. The protein is Insulin-like growth factor 2 of Ovis aries (Sheep).